A 234-amino-acid polypeptide reads, in one-letter code: 2-C-methyl-D-erythritol 4-phosphate cytidylyltransferase (234 aa).

This sequence belongs to the IspD/TarI cytidylyltransferase family. IspD subfamily.

The enzyme catalyses 2-C-methyl-D-erythritol 4-phosphate + CTP + H(+) = 4-CDP-2-C-methyl-D-erythritol + diphosphate. It participates in isoprenoid biosynthesis; isopentenyl diphosphate biosynthesis via DXP pathway; isopentenyl diphosphate from 1-deoxy-D-xylulose 5-phosphate: step 2/6. Functionally, catalyzes the formation of 4-diphosphocytidyl-2-C-methyl-D-erythritol from CTP and 2-C-methyl-D-erythritol 4-phosphate (MEP). This Desulforamulus reducens (strain ATCC BAA-1160 / DSM 100696 / MI-1) (Desulfotomaculum reducens) protein is 2-C-methyl-D-erythritol 4-phosphate cytidylyltransferase.